A 298-amino-acid chain; its full sequence is Ribosomal RNA small subunit methyltransferase H (298 aa).

Residues 35-37, aspartate 55, phenylalanine 82, aspartate 100, and glutamine 107 each bind S-adenosyl-L-methionine; that span reads GGH.

This sequence belongs to the methyltransferase superfamily. RsmH family.

The protein resides in the cytoplasm. It catalyses the reaction cytidine(1402) in 16S rRNA + S-adenosyl-L-methionine = N(4)-methylcytidine(1402) in 16S rRNA + S-adenosyl-L-homocysteine + H(+). In terms of biological role, specifically methylates the N4 position of cytidine in position 1402 (C1402) of 16S rRNA. This Chlamydia abortus (strain DSM 27085 / S26/3) (Chlamydophila abortus) protein is Ribosomal RNA small subunit methyltransferase H.